Here is a 364-residue protein sequence, read N- to C-terminus: Valine dehydrogenase (364 aa).

The active site involves lysine 91. NAD(+) is bound at residue 191 to 197 (GVGKVGH).

The protein belongs to the Glu/Leu/Phe/Val dehydrogenases family. As to quaternary structure, homodimer.

The protein resides in the cytoplasm. It catalyses the reaction L-valine + NAD(+) + H2O = 3-methyl-2-oxobutanoate + NH4(+) + NADH + H(+). The protein operates within amino-acid degradation; L-valine degradation. Its activity is regulated as follows. Repressed in minimal medium by the presence of glucose and NH4(+), glycerol and NH4(+), or glycerol and asparagine. Functionally, oxidative deamination of branched-chain amino acids. Oxidizes L-valine and L-alpha-aminobutyric acid efficiently, and L-isoleucine and L-leucine less efficiently. Does not act on D-valine. The catabolism of L-valine is the major source of fatty acid precursors for macrolide biosynthesis and a vital source of antibiotic precursors. Uses NAD; no activity was found with NADP. In Streptomyces coelicolor (strain ATCC BAA-471 / A3(2) / M145), this protein is Valine dehydrogenase (vdh).